The primary structure comprises 45 residues: Large ribosomal subunit protein bL34 (45 aa).

This sequence belongs to the bacterial ribosomal protein bL34 family.

The polypeptide is Large ribosomal subunit protein bL34 (Frankia casuarinae (strain DSM 45818 / CECT 9043 / HFP020203 / CcI3)).